A 366-amino-acid polypeptide reads, in one-letter code: Ribosomal RNA large subunit methyltransferase M (366 aa).

S-adenosyl-L-methionine is bound by residues Ser188, 221–224 (CPGG), Asp240, Asp260, and Asp277. Lys306 functions as the Proton acceptor in the catalytic mechanism.

The protein belongs to the class I-like SAM-binding methyltransferase superfamily. RNA methyltransferase RlmE family. RlmM subfamily. Monomer.

It is found in the cytoplasm. It carries out the reaction cytidine(2498) in 23S rRNA + S-adenosyl-L-methionine = 2'-O-methylcytidine(2498) in 23S rRNA + S-adenosyl-L-homocysteine + H(+). Catalyzes the 2'-O-methylation at nucleotide C2498 in 23S rRNA. The polypeptide is Ribosomal RNA large subunit methyltransferase M (Sodalis glossinidius (strain morsitans)).